We begin with the raw amino-acid sequence, 1039 residues long: Error-prone DNA polymerase (1039 aa).

The protein belongs to the DNA polymerase type-C family. DnaE2 subfamily.

It is found in the cytoplasm. It catalyses the reaction DNA(n) + a 2'-deoxyribonucleoside 5'-triphosphate = DNA(n+1) + diphosphate. In terms of biological role, DNA polymerase involved in damage-induced mutagenesis and translesion synthesis (TLS). It is not the major replicative DNA polymerase. In Corynebacterium diphtheriae (strain ATCC 700971 / NCTC 13129 / Biotype gravis), this protein is Error-prone DNA polymerase.